The chain runs to 278 residues: Secoisolariciresinol dehydrogenase (278 aa).

Residues 23–28, Asp-47, Val-73, and Asn-99 contribute to the NAD(+) site; that span reads GGAGGI. Residues Ser-104 and Ser-164 each contribute to the substrate site. Tyr-167 acts as the Proton donor/acceptor in catalysis. Lys-171 and Val-200 together coordinate NAD(+).

This sequence belongs to the short-chain dehydrogenases/reductases (SDR) family. In terms of assembly, homotetramer.

The catalysed reaction is (-)-secoisolariciresinol + 2 NAD(+) = (-)-matairesinol + 2 NADH + 2 H(+). Oxidoreductase involved in lignan biosynthesis. Catalyzes the stereospecific conversion of (-)-secoisolariciresinol to (-)-matairesinol via a lactol intermediate. This is Secoisolariciresinol dehydrogenase from Podophyllum peltatum (American mandrake).